The chain runs to 281 residues: NADPH-dependent 7-cyano-7-deazaguanine reductase (281 aa).

Substrate is bound at residue 88-90; that stretch reads IES. NADPH is bound at residue 90 to 91; it reads SK. Cysteine 189 acts as the Thioimide intermediate in catalysis. The active-site Proton donor is the aspartate 196. 228–229 provides a ligand contact to substrate; the sequence is HE. 257–258 provides a ligand contact to NADPH; it reads RG.

This sequence belongs to the GTP cyclohydrolase I family. QueF type 2 subfamily. In terms of assembly, homodimer.

The protein resides in the cytoplasm. The enzyme catalyses 7-aminomethyl-7-carbaguanine + 2 NADP(+) = 7-cyano-7-deazaguanine + 2 NADPH + 3 H(+). Its pathway is tRNA modification; tRNA-queuosine biosynthesis. In terms of biological role, catalyzes the NADPH-dependent reduction of 7-cyano-7-deazaguanine (preQ0) to 7-aminomethyl-7-deazaguanine (preQ1). The chain is NADPH-dependent 7-cyano-7-deazaguanine reductase from Yersinia enterocolitica serotype O:8 / biotype 1B (strain NCTC 13174 / 8081).